The following is a 398-amino-acid chain: Acetylornithine aminotransferase (398 aa).

Residues 105 to 106 (GA) and Phe-138 each bind pyridoxal 5'-phosphate. Arg-141 lines the N(2)-acetyl-L-ornithine pocket. 223–226 (DEVQ) contacts pyridoxal 5'-phosphate. N6-(pyridoxal phosphate)lysine is present on Lys-252. A N(2)-acetyl-L-ornithine-binding site is contributed by Thr-280. Residue Thr-281 participates in pyridoxal 5'-phosphate binding.

Belongs to the class-III pyridoxal-phosphate-dependent aminotransferase family. ArgD subfamily. Homodimer. Pyridoxal 5'-phosphate is required as a cofactor.

It localises to the cytoplasm. The enzyme catalyses N(2)-acetyl-L-ornithine + 2-oxoglutarate = N-acetyl-L-glutamate 5-semialdehyde + L-glutamate. It participates in amino-acid biosynthesis; L-arginine biosynthesis; N(2)-acetyl-L-ornithine from L-glutamate: step 4/4. The polypeptide is Acetylornithine aminotransferase (Methanocaldococcus jannaschii (strain ATCC 43067 / DSM 2661 / JAL-1 / JCM 10045 / NBRC 100440) (Methanococcus jannaschii)).